Here is a 729-residue protein sequence, read N- to C-terminus: Fatty acid oxidation complex subunit alpha (729 aa).

The interval 1–189 (MLYKGDTLYL…KIGLVDGVVK (189 aa)) is enoyl-CoA hydratase/isomerase. Asp296 is a substrate binding site. Residues 311–729 (ETPKQAAVLG…ARPVGDLKTA (419 aa)) form a 3-hydroxyacyl-CoA dehydrogenase region. Residues Met324, Asp343, 400-402 (VVE), Lys407, and Ser429 each bind NAD(+). Residue His450 is the For 3-hydroxyacyl-CoA dehydrogenase activity of the active site. Asn453 is a binding site for NAD(+). Residues Asn500 and Tyr660 each coordinate substrate. A disordered region spans residues 707-729 (ARHNEPYYPPVEPARPVGDLKTA).

It in the N-terminal section; belongs to the enoyl-CoA hydratase/isomerase family. In the C-terminal section; belongs to the 3-hydroxyacyl-CoA dehydrogenase family. In terms of assembly, heterotetramer of two alpha chains (FadB) and two beta chains (FadA).

It catalyses the reaction a (3S)-3-hydroxyacyl-CoA + NAD(+) = a 3-oxoacyl-CoA + NADH + H(+). It carries out the reaction a (3S)-3-hydroxyacyl-CoA = a (2E)-enoyl-CoA + H2O. The enzyme catalyses a 4-saturated-(3S)-3-hydroxyacyl-CoA = a (3E)-enoyl-CoA + H2O. The catalysed reaction is (3S)-3-hydroxybutanoyl-CoA = (3R)-3-hydroxybutanoyl-CoA. It catalyses the reaction a (3Z)-enoyl-CoA = a 4-saturated (2E)-enoyl-CoA. It carries out the reaction a (3E)-enoyl-CoA = a 4-saturated (2E)-enoyl-CoA. The protein operates within lipid metabolism; fatty acid beta-oxidation. Functionally, involved in the aerobic and anaerobic degradation of long-chain fatty acids via beta-oxidation cycle. Catalyzes the formation of 3-oxoacyl-CoA from enoyl-CoA via L-3-hydroxyacyl-CoA. It can also use D-3-hydroxyacyl-CoA and cis-3-enoyl-CoA as substrate. This chain is Fatty acid oxidation complex subunit alpha, found in Escherichia coli O6:K15:H31 (strain 536 / UPEC).